The chain runs to 730 residues: 1,4-alpha-glucan branching enzyme GlgB (730 aa).

Residue Asp405 is the Nucleophile of the active site. The active-site Proton donor is the Glu458.

Belongs to the glycosyl hydrolase 13 family. GlgB subfamily. In terms of assembly, monomer.

The enzyme catalyses Transfers a segment of a (1-&gt;4)-alpha-D-glucan chain to a primary hydroxy group in a similar glucan chain.. It functions in the pathway glycan biosynthesis; glycogen biosynthesis. In terms of biological role, catalyzes the formation of the alpha-1,6-glucosidic linkages in glycogen by scission of a 1,4-alpha-linked oligosaccharide from growing alpha-1,4-glucan chains and the subsequent attachment of the oligosaccharide to the alpha-1,6 position. The sequence is that of 1,4-alpha-glucan branching enzyme GlgB from Haemophilus influenzae (strain 86-028NP).